The sequence spans 527 residues: Peptide chain release factor 3 (527 aa).

The tr-type G domain maps to 9 to 277; sequence AKRRTFAIIS…AVVDWAPRPL (269 aa). Residues 18 to 25, 86 to 90, and 140 to 143 contribute to the GTP site; these read SHPDAGKT, DTPGH, and NKLD.

This sequence belongs to the TRAFAC class translation factor GTPase superfamily. Classic translation factor GTPase family. PrfC subfamily.

The protein localises to the cytoplasm. In terms of biological role, increases the formation of ribosomal termination complexes and stimulates activities of RF-1 and RF-2. It binds guanine nucleotides and has strong preference for UGA stop codons. It may interact directly with the ribosome. The stimulation of RF-1 and RF-2 is significantly reduced by GTP and GDP, but not by GMP. This Pseudomonas putida (strain ATCC 47054 / DSM 6125 / CFBP 8728 / NCIMB 11950 / KT2440) protein is Peptide chain release factor 3.